A 1985-amino-acid polypeptide reads, in one-letter code: Voltage-dependent L-type calcium channel subunit alpha-1F (1985 aa).

Basic and acidic residues predominate over residues 1–11; sequence MSESEVGKDTT. The segment at 1–56 is disordered; the sequence is MSESEVGKDTTPEPSPANGTGPGPEWGLCPGPPTVGTDTSGASGLGTPRRRTQHNK. Over 1–92 the chain is Cytoplasmic; it reads MSESEVGKDT…RSCISIVEWK (92 aa). The stretch at 79-375 is one I repeat; it reads NPIRRSCISI…LVLGVLSGEF (297 aa). A helical membrane pass occupies residues 93 to 111; sequence PFDILILLTIFANCVALGV. Over 112–129 the chain is Extracellular; sequence YIPFPEDDSNTANHNLEQ. The chain crosses the membrane as a helical span at residues 130–149; the sequence is VEYVFLVIFTVETVLKIVAY. The Cytoplasmic portion of the chain corresponds to 150 to 161; it reads GLVLHPSAYIRN. Residues 162 to 180 form a helical membrane-spanning segment; the sequence is GWNLLDFIIVVVGLFSVLL. Residues 181-201 lie on the Extracellular side of the membrane; sequence EQGPGRPGDAPHTGGKPGGFD. Residues 202-220 traverse the membrane as a helical segment; sequence VKALRAFRVLRPLRLVSGV. Over 221 to 239 the chain is Cytoplasmic; the sequence is PSLHIVVNSIMKALVPLLH. The chain crosses the membrane as a helical span at residues 240 to 259; sequence IALLVLFVIIIYAIIGLELF. The Extracellular segment spans residues 260-347; that stretch reads LGRMHKTCYF…WMQDAMGYEL (88 aa). A glycan (N-linked (GlcNAc...) asparagine) is linked at Asn295. Ca(2+) is bound at residue Glu330. Residues 348-372 form a helical membrane-spanning segment; the sequence is PWVYFVSLVIFGSFFVLNLVLGVLS. Topologically, residues 373-529 are cytoplasmic; sequence GEFSKEREKA…ARCRRAVKSN (157 aa). Positions 395–412 are binding to the beta subunit; it reads QQMEEDLRGYLDWITQAE. Residues 455-469 show a composition bias toward low complexity; that stretch reads SHSTRSTHSTSSHAS. A disordered region spans residues 455–490; the sequence is SHSTRSTHSTSSHASLPASDTGSMTDTPGDEDEEEG. An II repeat occupies 515 to 761; the sequence is NRGLRARCRR…VFLAIAVDNL (247 aa). The helical transmembrane segment at 530–549 threads the bilayer; it reads ACYWAVLLLVFLNTLTIASE. At 550-564 the chain is on the extracellular side; that stretch reads HHGQPLWLTQTQEYA. Residues 565–583 traverse the membrane as a helical segment; sequence NKVLLCLFTVEMLLKLYGL. Topologically, residues 584–591 are cytoplasmic; it reads GPSVYVAS. The helical transmembrane segment at 592-610 threads the bilayer; that stretch reads FFNRFDCFVVCGGILETTL. Residues 611–620 are Extracellular-facing; that stretch reads VEVGAMQPLG. The chain crosses the membrane as a helical span at residues 621–639; that stretch reads ISVLRCVRLLRIFKVTRHW. Residues 640 to 658 lie on the Cytoplasmic side of the membrane; the sequence is ASLSNLVASLLNSMKSIAS. A helical membrane pass occupies residues 659 to 679; that stretch reads LLLLLFLFIIIFSLLGMQLFG. The Extracellular portion of the chain corresponds to 680 to 733; the sequence is GKFNFDQTHTKRSTFDTFPQALLTVFQILTGEDWNVVMYDGIMAYGGPFFPGML. Residue Glu711 coordinates Ca(2+). The helical transmembrane segment at 734–758 threads the bilayer; sequence VCVYFIILFICGNYILLNVFLAIAV. Residues 759 to 876 lie on the Cytoplasmic side of the membrane; sequence DNLASGDAGT…KACHTLIHHH (118 aa). A disordered region spans residues 766–834; sequence AGTAKDKGRE…EEEEENGAGH (69 aa). Basic and acidic residues predominate over residues 768 to 787; the sequence is TAKDKGREKSSEGNPPKENK. Positions 810–830 are enriched in acidic residues; that stretch reads MEEEEEEEEEEEEEEEEEEEN. An III repeat occupies 858–1140; sequence CLSQTNPLRK…FFMMNIFVGF (283 aa). Residues 877 to 895 traverse the membrane as a helical segment; it reads IFTSLILVFIILSSVSLAA. Topologically, residues 896-911 are extracellular; it reads EDPIRAHSFRNHILGY. The helical transmembrane segment at 912-931 threads the bilayer; sequence FDYAFTSIFTVEILLKMTVF. Residues 932–943 lie on the Cytoplasmic side of the membrane; that stretch reads GAFLHRGSFCRS. Residues 944-962 form a helical membrane-spanning segment; the sequence is WFNLLDLLVVSVSLISFGI. At 963-968 the chain is on the extracellular side; the sequence is HSSAIS. A helical membrane pass occupies residues 969-988; it reads VVKILRVLRVLRPLRAINRA. At 989-1007 the chain is on the cytoplasmic side; the sequence is KGLKHVVQCVFVAIRTIGN. A helical transmembrane segment spans residues 1008 to 1027; the sequence is IMIVTTLLQFMFACIGVQLF. Residues 1028–1117 are Extracellular-facing; it reads KGKFYSCTDE…EGPIYNYHVE (90 aa). Residues 1065 to 1155 are dihydropyridine binding; that stretch reads RLWVNSDFNF…RAQGEQEYQN (91 aa). Position 1091 (Glu1091) interacts with Ca(2+). A helical membrane pass occupies residues 1118–1138; it reads ISVFFIVYIIIIAFFMMNIFV. The Cytoplasmic portion of the chain corresponds to 1139–1195; that stretch reads GFVIITFRAQGEQEYQNCELDKNQRQCVEYALKAQPLRRYIPKNPHQYRVWATVNSR. The stretch at 1182–1449 is one IV repeat; that stretch reads NPHQYRVWAT…LFVAVIMDNF (268 aa). The chain crosses the membrane as a helical span at residues 1196–1214; that stretch reads AFEYLMFLLILLNTVALAM. At 1215 to 1229 the chain is on the extracellular side; the sequence is QHYEQTAPFNYAMDI. Residues 1230-1249 form a helical membrane-spanning segment; the sequence is LNMVFTGLFTIEMVLKIIAF. Topologically, residues 1250 to 1256 are cytoplasmic; sequence KPKHYFA. The helical transmembrane segment at 1257–1278 threads the bilayer; sequence DAWNTFDALIVVGSVVDIAVTE. Residues 1279–1295 are Extracellular-facing; sequence VNNGGHLGESSEDTSRI. A helical transmembrane segment spans residues 1296 to 1315; that stretch reads SITFFRLFRVMRLVKLLSKG. Residues 1316-1334 are Cytoplasmic-facing; that stretch reads EGIRTLLWTFIKSFQALPY. The chain crosses the membrane as a helical span at residues 1335–1354; that stretch reads VALLIAMIFFIYAVIGMQMF. Residues 1355-1421 are Extracellular-facing; it reads GLVALQDGTQ…GEEFTCGSSF (67 aa). The dihydropyridine binding stretch occupies residues 1402–1468; sequence RCDPESDFGP…LGPHHLDEFK (67 aa). A phenylalkylamine binding region spans residues 1414 to 1457; that stretch reads EFTCGSSFAIVYFISFFMLCAFLIINLFVAVIMDNFDYLTRDWS. The chain crosses the membrane as a helical span at residues 1422–1446; sequence AIVYFISFFMLCAFLIINLFVAVIM. Over 1447 to 1982 the chain is Cytoplasmic; sequence DNFDYLTRDW…EDLGDEMACV (536 aa). 2 disordered regions span residues 1643–1729 and 1746–1778; these read VTEE…PHRR and LKGT…SFEP. A compositionally biased stretch (acidic residues) spans 1644-1665; it reads TEEEEEEEEAVGQEAEEEEAEN. Composition is skewed to polar residues over residues 1675-1687 and 1713-1724; these read DSQP…SRIS and NSRQPSVIQAGS. Over residues 1767-1776 the composition is skewed to basic and acidic residues; that stretch reads DLDRAGRDSF.

The protein belongs to the calcium channel alpha-1 subunit (TC 1.A.1.11) family. CACNA1F subfamily. As to quaternary structure, voltage-dependent calcium channels are multisubunit complexes, consisting of alpha-1, alpha-2, beta and delta subunits in a 1:1:1:1 ratio. The channel activity is directed by the pore-forming and voltage-sensitive alpha-1 subunit. In many cases, this subunit is sufficient to generate voltage-sensitive calcium channel activity. The auxiliary subunits beta and alpha-2/delta linked by a disulfide bridge regulate the channel activity. Interacts (via IQ domain) with CABP4; in a calcium independent manner. In terms of tissue distribution, expressed in the inner and outer nuclear layers and the genglion cell layer of the retina.

The protein localises to the membrane. It carries out the reaction Ca(2+)(in) = Ca(2+)(out). In terms of biological role, voltage-sensitive calcium channels (VSCC) mediate the entry of calcium ions into excitable cells and are also involved in a variety of calcium-dependent processes, including muscle contraction, hormone or neurotransmitter release, gene expression, cell motility, cell division and cell death. The isoform alpha-1F gives rise to L-type calcium currents. Long-lasting (L-type) calcium channels belong to the 'high-voltage activated' (HVA) group. They are blocked by dihydropyridines (DHP), phenylalkylamines, and by benzothiazepines. Activates at more negative voltages and does not undergo calcium-dependent inactivation (CDI), due to incoming calcium ions, during depolarization. The protein is Voltage-dependent L-type calcium channel subunit alpha-1F of Mus musculus (Mouse).